Here is a 165-residue protein sequence, read N- to C-terminus: Probable chemoreceptor glutamine deamidase CheD (165 aa).

The protein belongs to the CheD family.

The catalysed reaction is L-glutaminyl-[protein] + H2O = L-glutamyl-[protein] + NH4(+). Its function is as follows. Probably deamidates glutamine residues to glutamate on methyl-accepting chemotaxis receptors (MCPs), playing an important role in chemotaxis. In Clostridium tetani (strain Massachusetts / E88), this protein is Probable chemoreceptor glutamine deamidase CheD.